Consider the following 168-residue polypeptide: Putative peroxiredoxin prxA (168 aa).

In terms of domain architecture, Thioredoxin spans 4 to 158 (LKAGDSFPAD…LEPAKNHLEF (155 aa)). Residue Cys61 is the Cysteine sulfenic acid (-SOH) intermediate of the active site.

The protein belongs to the peroxiredoxin family. Prx5 subfamily. In terms of assembly, homodimer; disulfide-linked, upon oxidation. Interacts with thioredoxin trxA.

It catalyses the reaction a hydroperoxide + [thioredoxin]-dithiol = an alcohol + [thioredoxin]-disulfide + H2O. In terms of biological role, thiol-specific peroxidase that catalyzes the reduction of hydrogen peroxide and organic hydroperoxides to water and alcohols, respectively. Plays a role in cell protection against oxidative stress by detoxifying peroxides and as sensor of hydrogen peroxide-mediated signaling events. Involved in osmoadaptation. This chain is Putative peroxiredoxin prxA, found in Emericella nidulans (strain FGSC A4 / ATCC 38163 / CBS 112.46 / NRRL 194 / M139) (Aspergillus nidulans).